Reading from the N-terminus, the 108-residue chain is DVQMIQSPSSLSASLGDIVTMTCQASQGTNINLNWFQQKPGKAPKLLIYGASILEAGVPSRFSGRRYGTDFTLTISSLEDEDMATYFCLQHSYLPYTFGGGTKLEKKR.

Positions 1–23 (DVQMIQSPSSLSASLGDIVTMTC) are framework-1. The cysteines at positions 23 and 88 are disulfide-linked. Residues 24–34 (QASQGTNINLN) form a complementarity-determining-1 region. A framework-2 region spans residues 35 to 49 (WFQQKPGKAPKLLIY). The complementarity-determining-2 stretch occupies residues 50 to 56 (GASILEA). Positions 57-88 (GVPSRFSGRRYGTDFTLTISSLEDEDMATYFC) are framework-3. A complementarity-determining-3 region spans residues 89–97 (LQHSYLPYT). Residues 98–108 (FGGGTKLEKKR) form a framework-4 region.

This chain is Ig kappa chain V-V region EPC 109, found in Mus musculus (Mouse).